Reading from the N-terminus, the 133-residue chain is UPF0102 protein CYA_0680 (133 aa).

Belongs to the UPF0102 family.

This Synechococcus sp. (strain JA-3-3Ab) (Cyanobacteria bacterium Yellowstone A-Prime) protein is UPF0102 protein CYA_0680.